A 206-amino-acid polypeptide reads, in one-letter code: MARYLGPKLKLSRREGTDLFLKSGVRAIDSKCKLETAPGQHGARKPRLSEYGTQLREKQKVRRIYGVLEKQFRNYYKDAARLKGNTGENLLQLLETRLDNVVYRMGFGATRAESRQLVSHKSVMVNGRVVNIPSFKVSANDVVSIREKSRTQARIKAALEVAAQREKPTWVEVDSAKMEGAFKRVPERSDLSAEINEQLIVELYSK.

The S4 RNA-binding domain maps to 96-156 (TRLDNVVYRM…EKSRTQARIK (61 aa)).

Belongs to the universal ribosomal protein uS4 family. As to quaternary structure, part of the 30S ribosomal subunit. Contacts protein S5. The interaction surface between S4 and S5 is involved in control of translational fidelity.

Its function is as follows. One of the primary rRNA binding proteins, it binds directly to 16S rRNA where it nucleates assembly of the body of the 30S subunit. With S5 and S12 plays an important role in translational accuracy. This Shewanella putrefaciens (strain CN-32 / ATCC BAA-453) protein is Small ribosomal subunit protein uS4.